The following is a 113-amino-acid chain: uncharacterized protein (113 aa).

This is an uncharacterized protein from Saccharomyces cerevisiae (strain ATCC 204508 / S288c) (Baker's yeast).